The sequence spans 279 residues: Homeobox protein BarH-like 2 (279 aa).

2 disordered regions span residues 110–137 (APGG…RRSR) and 194–279 (KGGQ…PPLS). The span at 118–128 (SSESETEQPTP) shows a compositional bias: polar residues. The segment at residues 133-192 (PRRSRTIFTELQLMGLEKKFQKQKYLSTPDRLDLAQSLGLTQLQVKTWYQNRRMKWKKMV) is a DNA-binding region (homeobox). Residues 225–240 (NSQAQGQEQLEPSQGQ) are compositionally biased toward polar residues. Residues 261–279 (PPDPPQELPIPSSEPPPLS) are compositionally biased toward pro residues.

The protein belongs to the BAR homeobox family. As to expression, highly expressed in adult salivary gland and at much lower levels in mammary gland, kidney and placenta.

Its subcellular location is the nucleus. Its function is as follows. Transcription factor. Binds optimally to the DNA consensus sequence 5'-YYTAATGRTTTTY-3'. May control the expression of neural adhesion molecules such as L1 or Ng-CAM during embryonic development of both the central and peripherical nervous system. May be involved in controlling adhesive processes in keratinizing epithelia. In Homo sapiens (Human), this protein is Homeobox protein BarH-like 2 (BARX2).